A 333-amino-acid chain; its full sequence is Phosphoribosylformylglycinamidine cyclo-ligase (333 aa).

It belongs to the AIR synthase family.

The protein localises to the cytoplasm. It catalyses the reaction 2-formamido-N(1)-(5-O-phospho-beta-D-ribosyl)acetamidine + ATP = 5-amino-1-(5-phospho-beta-D-ribosyl)imidazole + ADP + phosphate + H(+). It functions in the pathway purine metabolism; IMP biosynthesis via de novo pathway; 5-amino-1-(5-phospho-D-ribosyl)imidazole from N(2)-formyl-N(1)-(5-phospho-D-ribosyl)glycinamide: step 2/2. In Clostridium perfringens (strain ATCC 13124 / DSM 756 / JCM 1290 / NCIMB 6125 / NCTC 8237 / Type A), this protein is Phosphoribosylformylglycinamidine cyclo-ligase.